A 747-amino-acid polypeptide reads, in one-letter code: H(+)/Cl(-) exchange transporter 4 (747 aa).

The interval 1 to 50 is required for localization in the endoplasmic reticulum; the sequence is MDFLEEPFPDVGTYEDFHTIDWLREKSRDTDRHRKITSKSKESIWEFIKS. The Cytoplasmic segment spans residues 1 to 54; that stretch reads MDFLEEPFPDVGTYEDFHTIDWLREKSRDTDRHRKITSKSKESIWEFIKSLLDA. 2 helical membrane-spanning segments follow: residues 55–92 and 138–161; these read WSGWVVMLLIGLLAGTLAGVIDLAVDWMTDLKEGVCLS and LNYLMYILWALLFAFLAVSLVRVF. The short motif at 167–171 is the Selectivity filter part_1 element; it reads GSGIP. Residue S168 coordinates chloride. Residues 170 to 177 constitute an intramembrane region (helical); the sequence is IPEIKTIL. 2 helical membrane-spanning segments follow: residues 187 to 205 and 211 to 230; these read GKWTLLIKTVTLVLVVSSG and EGPLVHVACCCGNFFSSLFS. The short motif at 209-213 is the Selectivity filter part_2 element; that stretch reads GKEGP. Intramembrane regions (helical) lie at residues 242 to 254 and 258 to 266; these read VLSAAAAAGVSVA and PIGGVLFSL. The next 5 membrane-spanning stretches (helical) occupy residues 278-296, 320-345, 352-372, 429-449, and 454-473; these read LWRSFFAALVAAFTLRSIN, FPFILLGVFGGLWGTLFTRCNIAWCR, LGRYPVLEVIAVTAVTAIVAY, MWQLALALIFKIVITIFTFGM, and GLFIPSMAVGAMAGRMVGIG. The Selectivity filter part_3 signature appears at 454 to 458; sequence GLFIP. A chloride-binding site is contributed by F456. 2 consecutive intramembrane regions (helical) follow at residues 501 to 515 and 519 to 530; these read GLYAMVGAAACLGGV and TVSLVVIMFELT. Residues 531 to 534 constitute an intramembrane region (note=Loop between two helices); the sequence is GGLE. The chain crosses the membrane as a helical span at residues 535–553; sequence YIVPLMAAAVTSKWVADAF. Topologically, residues 554 to 747 are cytoplasmic; it reads GKEGIYEAHI…NQDPESIMFN (194 aa). Y559 contacts chloride. 2 consecutive CBS domains span residues 587-653 and 680-742; these read MRPR…QRQE and LRRI…QDPE. ATP is bound by residues S597 and 618–620; that span reads YNG. Residues 654–683 form a required for localization in the endoplasmic reticulum region; the sequence is GIVSNSIMYFTEEPPELPANSPHPLKLRRI. 725–728 provides a ligand contact to ATP; the sequence is TKKD.

It belongs to the chloride channel (TC 2.A.49) family. ClC-4/CLCN4 subfamily. As to expression, predominantly present in excitable tissues such as nervous system and skeletal muscle. Not detected in heart.

Its subcellular location is the early endosome membrane. The protein localises to the late endosome membrane. The protein resides in the endoplasmic reticulum membrane. It is found in the lysosome membrane. It localises to the recycling endosome membrane. Functionally, strongly outwardly rectifying, electrogenic H(+)/Cl(-)exchanger which mediates the exchange of chloride ions against protons. The CLC channel family contains both chloride channels and proton-coupled anion transporters that exchange chloride or another anion for protons. The presence of conserved gating glutamate residues is typical for family members that function as antiporters. The sequence is that of H(+)/Cl(-) exchange transporter 4 (Clcn4) from Mus musculus (Mouse).